Consider the following 155-residue polypeptide: Biotin carboxyl carrier protein of acetyl-CoA carboxylase (155 aa).

In terms of domain architecture, Biotinyl-binding spans 72–155; sequence AASDELSGHL…EFDEPLIVIE (84 aa). At lysine 121 the chain carries N6-biotinyllysine.

In terms of assembly, homodimer.

The protein operates within lipid metabolism; fatty acid biosynthesis. Its function is as follows. This protein is a component of the acetyl coenzyme A carboxylase complex; first, biotin carboxylase catalyzes the carboxylation of the carrier protein and then the transcarboxylase transfers the carboxyl group to form malonyl-CoA. This chain is Biotin carboxyl carrier protein of acetyl-CoA carboxylase (accB), found in Haemophilus influenzae (strain ATCC 51907 / DSM 11121 / KW20 / Rd).